We begin with the raw amino-acid sequence, 171 residues long: Peptide methionine sulfoxide reductase MsrA (171 aa).

C13 is a catalytic residue.

Belongs to the MsrA Met sulfoxide reductase family.

The enzyme catalyses L-methionyl-[protein] + [thioredoxin]-disulfide + H2O = L-methionyl-(S)-S-oxide-[protein] + [thioredoxin]-dithiol. It catalyses the reaction [thioredoxin]-disulfide + L-methionine + H2O = L-methionine (S)-S-oxide + [thioredoxin]-dithiol. Its function is as follows. Has an important function as a repair enzyme for proteins that have been inactivated by oxidation. Catalyzes the reversible oxidation-reduction of methionine sulfoxide in proteins to methionine. The protein is Peptide methionine sulfoxide reductase MsrA of Mycobacterium sp. (strain JLS).